A 279-amino-acid chain; its full sequence is Movement protein (279 aa).

The interval 246 to 279 (SESEELNVESPPAAIGSSSASRSEAFRPQVVNGL) is disordered. The segment covering 254-268 (ESPPAAIGSSSASRS) has biased composition (low complexity).

The protein belongs to the cucumovirus movement protein family.

It localises to the host cell junction. Its subcellular location is the host plasmodesma. In terms of biological role, transports viral genome to neighboring plant cells directly through plasmosdesmata, without any budding. The movement protein allows efficient cell to cell propagation, by bypassing the host cell wall barrier. Acts by forming a tubular structure at the host plasmodesmata, enlarging it enough to allow free passage of virion capsids. The polypeptide is Movement protein (Cucumber mosaic virus (strain CS) (CMV)).